The chain runs to 124 residues: Fluoride-specific ion channel FluC (124 aa).

4 consecutive transmembrane segments (helical) span residues 4-24, 35-55, 62-82, and 95-115; these read VLFVALGGSIGAVLRYLISLL, FGTLVVNILGSFLMGVIFALG, PEIKAFIGVGMLGALTTFSTF, and LVKAVLNVVVNVGVCIFVVYL. The Na(+) site is built by Gly-74 and Thr-77.

This sequence belongs to the fluoride channel Fluc/FEX (TC 1.A.43) family.

The protein localises to the cell inner membrane. It catalyses the reaction fluoride(in) = fluoride(out). Its activity is regulated as follows. Na(+) is not transported, but it plays an essential structural role and its presence is essential for fluoride channel function. Fluoride-specific ion channel. Important for reducing fluoride concentration in the cell, thus reducing its toxicity. The chain is Fluoride-specific ion channel FluC from Shewanella halifaxensis (strain HAW-EB4).